The following is a 232-amino-acid chain: Vesicle transport through interaction with t-SNAREs homolog 1B (232 aa).

Ala-2 carries the post-translational modification N-acetylalanine. Interaction with CLINT1 stretches follow at residues 2 to 23 (ATSAASSEHFEKLHEIFRGLHE) and 69 to 73 (APLSF). At 2–208 (ATSAASSEHF…SRKVTTNKLL (207 aa)) the chain is on the cytoplasmic side. Residues 35–98 (MAGTEEKKKL…AKLHREVRST (64 aa)) are a coiled coil. Thr-103 bears the Phosphothreonine mark. Position 107 is an omega-N-methylarginine (Arg-107). Ser-138 bears the Phosphoserine mark. Positions 161-198 (SEIIEELGEQRDQLERTKSRLVNTSENLSKSRKILRSM) form a coiled coil. Residues 209–229 (LSIVILLELAILGGLVYYKFL) traverse the membrane as a helical; Anchor for type IV membrane protein segment. Residues 230–232 (RRH) lie on the Vesicular side of the membrane.

This sequence belongs to the VTI1 family. In terms of assembly, forms a SNARE complex with STX7, STX8 and VAMP8 which functions in the homotypic fusion of late endosomes. Component of the SNARE complex composed of STX7, STX8, VAMP7 and VIT1B that is required for heterotypic fusion of late endosomes with lysosomes. May interact with STX17. Interacts with CLINT1.

The protein localises to the early endosome membrane. The protein resides in the late endosome membrane. Its subcellular location is the lysosome membrane. It is found in the cytoplasmic granule. It localises to the recycling endosome membrane. Its function is as follows. V-SNARE that mediates vesicle transport pathways through interactions with t-SNAREs on the target membrane. These interactions are proposed to mediate aspects of the specificity of vesicle trafficking and to promote fusion of the lipid bilayers. May be concerned with increased secretion of cytokines associated with cellular senescence. In Bos taurus (Bovine), this protein is Vesicle transport through interaction with t-SNAREs homolog 1B (VTI1B).